We begin with the raw amino-acid sequence, 303 residues long: Bifunctional protein FolD (303 aa).

NADP(+) contacts are provided by residues 168–170 (GRS), Thr197, and Val238.

Belongs to the tetrahydrofolate dehydrogenase/cyclohydrolase family. Homodimer.

The catalysed reaction is (6R)-5,10-methylene-5,6,7,8-tetrahydrofolate + NADP(+) = (6R)-5,10-methenyltetrahydrofolate + NADPH. It carries out the reaction (6R)-5,10-methenyltetrahydrofolate + H2O = (6R)-10-formyltetrahydrofolate + H(+). It functions in the pathway one-carbon metabolism; tetrahydrofolate interconversion. Catalyzes the oxidation of 5,10-methylenetetrahydrofolate to 5,10-methenyltetrahydrofolate and then the hydrolysis of 5,10-methenyltetrahydrofolate to 10-formyltetrahydrofolate. In Desulfosudis oleivorans (strain DSM 6200 / JCM 39069 / Hxd3) (Desulfococcus oleovorans), this protein is Bifunctional protein FolD.